The chain runs to 328 residues: DNA-directed RNA polymerase subunit alpha (328 aa).

The interval 1 to 231 (MIYQMQMPAK…EHVTFFADFS (231 aa)) is alpha N-terminal domain (alpha-NTD). An alpha C-terminal domain (alpha-CTD) region spans residues 252 to 328 (MRKLFNTKIE…MDITKYQMKG (77 aa)).

The protein belongs to the RNA polymerase alpha chain family. Homodimer. The RNAP catalytic core consists of 2 alpha, 1 beta, 1 beta' and 1 omega subunit. When a sigma factor is associated with the core the holoenzyme is formed, which can initiate transcription.

The catalysed reaction is RNA(n) + a ribonucleoside 5'-triphosphate = RNA(n+1) + diphosphate. In terms of biological role, DNA-dependent RNA polymerase catalyzes the transcription of DNA into RNA using the four ribonucleoside triphosphates as substrates. This chain is DNA-directed RNA polymerase subunit alpha, found in Chlorobium limicola (strain DSM 245 / NBRC 103803 / 6330).